Here is a 278-residue protein sequence, read N- to C-terminus: Large ribosomal subunit protein uL2 (278 aa).

A disordered region spans residues 225 to 278 (MNPVDHPHGGGEGRTSGGRHPVTPWGKPTKGKKTRANKATDKYIVRSRHQKKKG). Over residues 269–278 (VRSRHQKKKG) the composition is skewed to basic residues.

Belongs to the universal ribosomal protein uL2 family. In terms of assembly, part of the 50S ribosomal subunit. Forms a bridge to the 30S subunit in the 70S ribosome.

In terms of biological role, one of the primary rRNA binding proteins. Required for association of the 30S and 50S subunits to form the 70S ribosome, for tRNA binding and peptide bond formation. It has been suggested to have peptidyltransferase activity; this is somewhat controversial. Makes several contacts with the 16S rRNA in the 70S ribosome. The chain is Large ribosomal subunit protein uL2 from Parvibaculum lavamentivorans (strain DS-1 / DSM 13023 / NCIMB 13966).